We begin with the raw amino-acid sequence, 210 residues long: Large ribosomal subunit protein bL25 (210 aa).

The disordered stretch occupies residues 175-210 (IATILPPQQEEEIDSGEQQEAGQPDAAEGRETTPEE). Positions 201–210 (AEGRETTPEE) are enriched in basic and acidic residues.

Belongs to the bacterial ribosomal protein bL25 family. CTC subfamily. As to quaternary structure, part of the 50S ribosomal subunit; part of the 5S rRNA/L5/L18/L25 subcomplex. Contacts the 5S rRNA. Binds to the 5S rRNA independently of L5 and L18.

Functionally, this is one of the proteins that binds to the 5S RNA in the ribosome where it forms part of the central protuberance. This Geobacillus kaustophilus (strain HTA426) protein is Large ribosomal subunit protein bL25.